We begin with the raw amino-acid sequence, 548 residues long: Chaperonin GroEL (548 aa).

ATP is bound by residues 29–32, K50, 86–90, G414, 478–480, and D494; these read TLGP, DGTTT, and NAA.

This sequence belongs to the chaperonin (HSP60) family. As to quaternary structure, forms a cylinder of 14 subunits composed of two heptameric rings stacked back-to-back. Interacts with the co-chaperonin GroES.

The protein resides in the cytoplasm. It catalyses the reaction ATP + H2O + a folded polypeptide = ADP + phosphate + an unfolded polypeptide.. Its function is as follows. Together with its co-chaperonin GroES, plays an essential role in assisting protein folding. The GroEL-GroES system forms a nano-cage that allows encapsulation of the non-native substrate proteins and provides a physical environment optimized to promote and accelerate protein folding. In Psychrobacter sp. (strain PRwf-1), this protein is Chaperonin GroEL.